The following is a 398-amino-acid chain: Substance-K receptor (398 aa).

The Extracellular portion of the chain corresponds to 1 to 32 (MGTCDIVTEANISSGPESNTTGITAFSMPSWQ). N-linked (GlcNAc...) asparagine glycans are attached at residues Asn11 and Asn19. The chain crosses the membrane as a helical span at residues 33-56 (LALWATAYLALVLVAVTGNAIVIW). The Cytoplasmic segment spans residues 57-69 (IILAHRRMRTVTN). Residues 70–90 (YFIVNLALADLCMAAFNAAFN) traverse the membrane as a helical segment. Topologically, residues 91–107 (FVYASHNIWYFGRAFCY) are extracellular. An intrachain disulfide couples Cys106 to Cys181. Residues 108–129 (FQNLFPITAMFVSIYSMTAIAA) form a helical membrane-spanning segment. Topologically, residues 130 to 149 (DRYMAIVHPFQPRLSAPSTK) are cytoplasmic. The chain crosses the membrane as a helical span at residues 150–170 (AVIAGIWLVALALASPQCFYS). Topologically, residues 171–196 (TVTMDQGATKCVVAWPEDSGGKTLLL) are extracellular. The helical transmembrane segment at 197 to 218 (YHLVVIALIYFLPLAVMFVAYS) threads the bilayer. The Cytoplasmic portion of the chain corresponds to 219–251 (VIGLTLWRRAVPGHQAHGANLRHLQAMKKFVKT). Residues 252 to 272 (MVLVVLTFAICWLPYHLYFIL) form a helical membrane-spanning segment. Topologically, residues 273–290 (GSFQEDIYCHKFIQQVYL) are extracellular. The chain crosses the membrane as a helical span at residues 291–310 (ALFWLAMSSTMYNPIIYCCL). At 311–398 (NHRFRSGFRL…LAPTKTHVEI (88 aa)) the chain is on the cytoplasmic side. Cys324 carries the S-palmitoyl cysteine lipid modification.

This sequence belongs to the G-protein coupled receptor 1 family.

It localises to the cell membrane. Its function is as follows. This is a receptor for the tachykinin neuropeptide substance K (neurokinin A). It is associated with G proteins that activate a phosphatidylinositol-calcium second messenger system. The rank order of affinity of this receptor to tachykinins is: substance K &gt; neuromedin-K &gt; substance P. The chain is Substance-K receptor (TACR2) from Homo sapiens (Human).